The chain runs to 389 residues: tRNA-specific 2-thiouridylase MnmA (389 aa).

ATP is bound by residues 33-40 (GLSGGVDS) and Leu-59. Catalysis depends on Cys-120, which acts as the Nucleophile. A disulfide bond links Cys-120 and Cys-219. An ATP-binding site is contributed by Gly-145. The segment at 169–171 (KDQ) is interaction with tRNA. Catalysis depends on Cys-219, which acts as the Cysteine persulfide intermediate. An interaction with tRNA region spans residues 326–327 (RY).

This sequence belongs to the MnmA/TRMU family.

The protein localises to the cytoplasm. It catalyses the reaction S-sulfanyl-L-cysteinyl-[protein] + uridine(34) in tRNA + AH2 + ATP = 2-thiouridine(34) in tRNA + L-cysteinyl-[protein] + A + AMP + diphosphate + H(+). In terms of biological role, catalyzes the 2-thiolation of uridine at the wobble position (U34) of tRNA, leading to the formation of s(2)U34. In Synechococcus sp. (strain WH7803), this protein is tRNA-specific 2-thiouridylase MnmA.